Here is a 269-residue protein sequence, read N- to C-terminus: Eukaryotic translation initiation factor 3 subunit G (269 aa).

The segment at 140–181 is disordered; that stretch reads AIGGGDMSAQGGSGSGRYVPPSLRAGARDPSSNAYQDQRERD. Gly residues predominate over residues 141 to 154; that stretch reads IGGGDMSAQGGSGS. Ser-161 carries the phosphoserine modification. One can recognise an RRM domain in the interval 184–263; it reads KTIRLTQVNE…FMLHAEWSKP (80 aa).

This sequence belongs to the eIF-3 subunit G family. In terms of assembly, component of the eukaryotic translation initiation factor 3 (eIF-3) complex.

The protein localises to the cytoplasm. Its function is as follows. RNA-binding component of the eukaryotic translation initiation factor 3 (eIF-3) complex, which is involved in protein synthesis of a specialized repertoire of mRNAs and, together with other initiation factors, stimulates binding of mRNA and methionyl-tRNAi to the 40S ribosome. The eIF-3 complex specifically targets and initiates translation of a subset of mRNAs involved in cell proliferation. This subunit can bind 18S rRNA. The chain is Eukaryotic translation initiation factor 3 subunit G from Kluyveromyces lactis (strain ATCC 8585 / CBS 2359 / DSM 70799 / NBRC 1267 / NRRL Y-1140 / WM37) (Yeast).